The primary structure comprises 253 residues: Proteasome subunit alpha type-7 (253 aa).

This sequence belongs to the peptidase T1A family. As to quaternary structure, the 26S proteasome consists of a 20S proteasome core and two 19S regulatory subunits. The 20S proteasome core is composed of 28 subunits that are arranged in four stacked rings, resulting in a barrel-shaped structure. The two end rings are each formed by seven alpha subunits, and the two central rings are each formed by seven beta subunits. The catalytic chamber with the active sites is on the inside of the barrel.

It is found in the cytoplasm. It localises to the nucleus. The proteasome is a multicatalytic proteinase complex which is characterized by its ability to cleave peptides with Arg, Phe, Tyr, Leu, and Glu adjacent to the leaving group at neutral or slightly basic pH. The proteasome has an ATP-dependent proteolytic activity. This chain is Proteasome subunit alpha type-7 (pas-4), found in Caenorhabditis elegans.